The primary structure comprises 432 residues: Histidine--tRNA ligase (432 aa).

The interval 412–432 (TQVPLAAFPPEEGRPTYDDYA) is disordered. A compositionally biased stretch (basic and acidic residues) spans 422–432 (EEGRPTYDDYA).

The protein belongs to the class-II aminoacyl-tRNA synthetase family.

The protein localises to the cytoplasm. It carries out the reaction tRNA(His) + L-histidine + ATP = L-histidyl-tRNA(His) + AMP + diphosphate + H(+). This chain is Histidine--tRNA ligase, found in Natronomonas pharaonis (strain ATCC 35678 / DSM 2160 / CIP 103997 / JCM 8858 / NBRC 14720 / NCIMB 2260 / Gabara) (Halobacterium pharaonis).